The sequence spans 163 residues: Transcriptional repressor NrdR (163 aa).

The segment at 3–34 is a zinc-finger region; it reads CPFCRHDDSRVVDSRTTDDGSSIRRRRQCPNC. Residues 46 to 136 form the ATP-cone domain; it reads LSVIKRSGAP…VYQAFDSLAD (91 aa).

It belongs to the NrdR family. It depends on Zn(2+) as a cofactor.

Its function is as follows. Negatively regulates transcription of bacterial ribonucleotide reductase nrd genes and operons by binding to NrdR-boxes. The polypeptide is Transcriptional repressor NrdR (Kineococcus radiotolerans (strain ATCC BAA-149 / DSM 14245 / SRS30216)).